We begin with the raw amino-acid sequence, 146 residues long: Regulator of ribonuclease activity B (146 aa).

Residues 110–146 (WGTYFEDPDGEEEEGDEFDQDDEDGPADRDEVPATRH) are disordered. Residues 115–134 (EDPDGEEEEGDEFDQDDEDG) are compositionally biased toward acidic residues. The segment covering 135-146 (PADRDEVPATRH) has biased composition (basic and acidic residues).

It belongs to the RraB family. In terms of assembly, interacts with the C-terminal region of Rne.

Its subcellular location is the cytoplasm. In terms of biological role, globally modulates RNA abundance by binding to RNase E (Rne) and regulating its endonucleolytic activity. Can modulate Rne action in a substrate-dependent manner by altering the composition of the degradosome. This chain is Regulator of ribonuclease activity B, found in Sodalis glossinidius (strain morsitans).